We begin with the raw amino-acid sequence, 146 residues long: Protein beta (146 aa).

This chain is Protein beta, found in Adelaide River virus (ARV).